The following is a 235-amino-acid chain: Ubiquinone/menaquinone biosynthesis C-methyltransferase UbiE (235 aa).

T60 and D81 together coordinate S-adenosyl-L-methionine.

It belongs to the class I-like SAM-binding methyltransferase superfamily. MenG/UbiE family.

It carries out the reaction a 2-demethylmenaquinol + S-adenosyl-L-methionine = a menaquinol + S-adenosyl-L-homocysteine + H(+). The enzyme catalyses a 2-methoxy-6-(all-trans-polyprenyl)benzene-1,4-diol + S-adenosyl-L-methionine = a 5-methoxy-2-methyl-3-(all-trans-polyprenyl)benzene-1,4-diol + S-adenosyl-L-homocysteine + H(+). Its pathway is quinol/quinone metabolism; menaquinone biosynthesis; menaquinol from 1,4-dihydroxy-2-naphthoate: step 2/2. It participates in cofactor biosynthesis; ubiquinone biosynthesis. In terms of biological role, methyltransferase required for the conversion of demethylmenaquinol (DMKH2) to menaquinol (MKH2) and the conversion of 2-polyprenyl-6-methoxy-1,4-benzoquinol (DDMQH2) to 2-polyprenyl-3-methyl-6-methoxy-1,4-benzoquinol (DMQH2). This Geotalea daltonii (strain DSM 22248 / JCM 15807 / FRC-32) (Geobacter daltonii) protein is Ubiquinone/menaquinone biosynthesis C-methyltransferase UbiE.